The following is a 322-amino-acid chain: 4-hydroxy-3-methylbut-2-enyl diphosphate reductase (322 aa).

Cysteine 15 contributes to the [4Fe-4S] cluster binding site. (2E)-4-hydroxy-3-methylbut-2-enyl diphosphate is bound by residues histidine 44 and histidine 77. 2 residues coordinate dimethylallyl diphosphate: histidine 44 and histidine 77. Isopentenyl diphosphate is bound by residues histidine 44 and histidine 77. Cysteine 99 provides a ligand contact to [4Fe-4S] cluster. Histidine 127 contacts (2E)-4-hydroxy-3-methylbut-2-enyl diphosphate. Histidine 127 contacts dimethylallyl diphosphate. Histidine 127 contributes to the isopentenyl diphosphate binding site. The active-site Proton donor is the glutamate 129. Threonine 168 is a binding site for (2E)-4-hydroxy-3-methylbut-2-enyl diphosphate. Cysteine 198 contributes to the [4Fe-4S] cluster binding site. The (2E)-4-hydroxy-3-methylbut-2-enyl diphosphate site is built by serine 226, serine 227, asparagine 228, and serine 270. Positions 226, 227, 228, and 270 each coordinate dimethylallyl diphosphate. Isopentenyl diphosphate-binding residues include serine 226, serine 227, asparagine 228, and serine 270.

Belongs to the IspH family. Requires [4Fe-4S] cluster as cofactor.

The enzyme catalyses isopentenyl diphosphate + 2 oxidized [2Fe-2S]-[ferredoxin] + H2O = (2E)-4-hydroxy-3-methylbut-2-enyl diphosphate + 2 reduced [2Fe-2S]-[ferredoxin] + 2 H(+). It carries out the reaction dimethylallyl diphosphate + 2 oxidized [2Fe-2S]-[ferredoxin] + H2O = (2E)-4-hydroxy-3-methylbut-2-enyl diphosphate + 2 reduced [2Fe-2S]-[ferredoxin] + 2 H(+). It participates in isoprenoid biosynthesis; dimethylallyl diphosphate biosynthesis; dimethylallyl diphosphate from (2E)-4-hydroxy-3-methylbutenyl diphosphate: step 1/1. The protein operates within isoprenoid biosynthesis; isopentenyl diphosphate biosynthesis via DXP pathway; isopentenyl diphosphate from 1-deoxy-D-xylulose 5-phosphate: step 6/6. Its function is as follows. Catalyzes the conversion of 1-hydroxy-2-methyl-2-(E)-butenyl 4-diphosphate (HMBPP) into a mixture of isopentenyl diphosphate (IPP) and dimethylallyl diphosphate (DMAPP). Acts in the terminal step of the DOXP/MEP pathway for isoprenoid precursor biosynthesis. The polypeptide is 4-hydroxy-3-methylbut-2-enyl diphosphate reductase (Neisseria meningitidis serogroup A / serotype 4A (strain DSM 15465 / Z2491)).